A 178-amino-acid chain; its full sequence is Cytochrome c-type biogenesis protein CcmE (178 aa).

The Cytoplasmic segment spans residues 1–8; it reads MNPRRKKR. The chain crosses the membrane as a helical; Signal-anchor for type II membrane protein span at residues 9-29; sequence LAIVGSILIGIGVVSGLVLYA. The Periplasmic segment spans residues 30 to 178; that stretch reads LSQNIDLFFT…QLESKKTNSY (149 aa). Positions 143 and 147 each coordinate heme. The tract at residues 154–178 is disordered; the sequence is EAAGQKHDKATYSDKQLESKKTNSY. The span at 157–178 shows a compositional bias: basic and acidic residues; it reads GQKHDKATYSDKQLESKKTNSY.

The protein belongs to the CcmE/CycJ family.

The protein resides in the cell inner membrane. Its function is as follows. Heme chaperone required for the biogenesis of c-type cytochromes. Transiently binds heme delivered by CcmC and transfers the heme to apo-cytochromes in a process facilitated by CcmF and CcmH. The polypeptide is Cytochrome c-type biogenesis protein CcmE (Colwellia psychrerythraea (strain 34H / ATCC BAA-681) (Vibrio psychroerythus)).